We begin with the raw amino-acid sequence, 39 residues long: MTPSLANFLWSLLWGTAIVVIPVTVGLIFISQKDKIQRS.

The helical transmembrane segment at 10 to 30 threads the bilayer; sequence WSLLWGTAIVVIPVTVGLIFI.

It belongs to the PsbX family. Type 1 subfamily. As to quaternary structure, PSII is composed of 1 copy each of membrane proteins PsbA, PsbB, PsbC, PsbD, PsbE, PsbF, PsbH, PsbI, PsbJ, PsbK, PsbL, PsbM, PsbT, PsbX, PsbY, PsbZ, Psb30/Ycf12, peripheral proteins PsbO, CyanoQ (PsbQ), PsbU, PsbV and a large number of cofactors. It forms dimeric complexes.

The protein resides in the cellular thylakoid membrane. Its function is as follows. Involved in the binding and/or turnover of quinones at the Q(B) site of photosystem II (PSII). PSII is a light-driven water plastoquinone oxidoreductase, using light energy to abstract electrons from H(2)O, generating a proton gradient subsequently used for ATP formation. The polypeptide is Photosystem II reaction center protein X (Nostoc punctiforme (strain ATCC 29133 / PCC 73102)).